A 568-amino-acid polypeptide reads, in one-letter code: Proline--tRNA ligase (568 aa).

This sequence belongs to the class-II aminoacyl-tRNA synthetase family. ProS type 1 subfamily. In terms of assembly, homodimer.

It is found in the cytoplasm. The catalysed reaction is tRNA(Pro) + L-proline + ATP = L-prolyl-tRNA(Pro) + AMP + diphosphate. Its function is as follows. Catalyzes the attachment of proline to tRNA(Pro) in a two-step reaction: proline is first activated by ATP to form Pro-AMP and then transferred to the acceptor end of tRNA(Pro). As ProRS can inadvertently accommodate and process non-cognate amino acids such as alanine and cysteine, to avoid such errors it has two additional distinct editing activities against alanine. One activity is designated as 'pretransfer' editing and involves the tRNA(Pro)-independent hydrolysis of activated Ala-AMP. The other activity is designated 'posttransfer' editing and involves deacylation of mischarged Ala-tRNA(Pro). The misacylated Cys-tRNA(Pro) is not edited by ProRS. The protein is Proline--tRNA ligase of Aliarcobacter butzleri (strain RM4018) (Arcobacter butzleri).